We begin with the raw amino-acid sequence, 781 residues long: Phenylalanine--tRNA ligase beta subunit (781 aa).

In terms of domain architecture, tRNA-binding spans 39 to 147 (APPFNDVVVA…DDAPVGEDLR (109 aa)). The B5 domain maps to 398–473 (PRREPIELRL…RLFGYDRIPA (76 aa)). The Mg(2+) site is built by Asp-451, Asp-457, Glu-460, and Glu-461. The 94-residue stretch at 687-780 (SRFPQVRRDL…AARRCSATLR (94 aa)) folds into the FDX-ACB domain.

It belongs to the phenylalanyl-tRNA synthetase beta subunit family. Type 1 subfamily. In terms of assembly, tetramer of two alpha and two beta subunits. Mg(2+) is required as a cofactor.

It localises to the cytoplasm. The catalysed reaction is tRNA(Phe) + L-phenylalanine + ATP = L-phenylalanyl-tRNA(Phe) + AMP + diphosphate + H(+). The polypeptide is Phenylalanine--tRNA ligase beta subunit (Thiobacillus denitrificans (strain ATCC 25259 / T1)).